An 86-amino-acid chain; its full sequence is Large ribosomal subunit protein bL27 (86 aa).

Positions 1 to 20 are disordered; it reads MAHKKAGGSSRNGRDSESKR.

Belongs to the bacterial ribosomal protein bL27 family.

The protein is Large ribosomal subunit protein bL27 of Paraburkholderia phymatum (strain DSM 17167 / CIP 108236 / LMG 21445 / STM815) (Burkholderia phymatum).